The primary structure comprises 933 residues: Isoleucine--tRNA ligase (933 aa).

The 'HIGH' region signature appears at 57-67; sequence PYANGNIHVGH. E554 is a binding site for L-isoleucyl-5'-AMP. Positions 595 to 599 match the 'KMSKS' region motif; it reads KMSKS. ATP is bound at residue K598.

The protein belongs to the class-I aminoacyl-tRNA synthetase family. IleS type 1 subfamily. As to quaternary structure, monomer.

It is found in the cytoplasm. The enzyme catalyses tRNA(Ile) + L-isoleucine + ATP = L-isoleucyl-tRNA(Ile) + AMP + diphosphate. Catalyzes the attachment of isoleucine to tRNA(Ile). As IleRS can inadvertently accommodate and process structurally similar amino acids such as valine, to avoid such errors it has two additional distinct tRNA(Ile)-dependent editing activities. One activity is designated as 'pretransfer' editing and involves the hydrolysis of activated Val-AMP. The other activity is designated 'posttransfer' editing and involves deacylation of mischarged Val-tRNA(Ile). This chain is Isoleucine--tRNA ligase, found in Streptococcus pyogenes serotype M3 (strain ATCC BAA-595 / MGAS315).